We begin with the raw amino-acid sequence, 363 residues long: Outer membrane porin F (363 aa).

Positions 1–22 (MMKRKILAAVIPALLAAATANA) are cleaved as a signal peptide.

Belongs to the Gram-negative porin family. As to quaternary structure, homotrimer. Forms mixed heterotrimers with OmpC and with PhoE; other mixed heterotrimers with other porins are also probable.

Its subcellular location is the cell outer membrane. Forms pores that allow passive diffusion of small molecules across the outer membrane. The protein is Outer membrane porin F of Salmonella typhimurium (strain SL1344).